The sequence spans 291 residues: MLRREARLRREYLYRKAREEAQRSAQERKERLRRALEENRLIPTELRREALALQGSLEFDDAGGEGVTSHVDDEYRWAGVEDPKVMITTSRDPSSRLKMFAKELKLVFPGAQRMNRGRHEVGALVRACKANGVTDLLVVHEHRGTPVGLIVSHLPFGPTAYFTLCNVVMRHDIPDLGTMSEAKPHLITHGFSSRLGKRVSDILRYLFPVPKDDSHRVITFANQDDYISFRHHVYKKTDHRNVELTEVGPRFELKLYMIRLGTLEQEATADVEWRWHPYTNTARKRVFLSTE.

One can recognise a Brix domain in the interval Pro83–Glu264.

As to quaternary structure, part of the small subunit (SSU) processome, composed of more than 70 proteins and the RNA chaperone small nucleolar RNA (snoRNA) U3. Component of a heterotrimeric complex containing IMP3, IMP4 and MPHOSPH10. Interacts with MPHOSPH10.

The protein resides in the nucleus. It localises to the nucleolus. Functionally, component of the 60-80S U3 small nucleolar ribonucleoprotein (U3 snoRNP). Required for the early cleavages during pre-18S ribosomal RNA processing. Part of the small subunit (SSU) processome, first precursor of the small eukaryotic ribosomal subunit. During the assembly of the SSU processome in the nucleolus, many ribosome biogenesis factors, an RNA chaperone and ribosomal proteins associate with the nascent pre-rRNA and work in concert to generate RNA folding, modifications, rearrangements and cleavage as well as targeted degradation of pre-ribosomal RNA by the RNA exosome. The chain is U3 small nucleolar ribonucleoprotein protein IMP4 from Homo sapiens (Human).